Consider the following 1438-residue polypeptide: DNA polymerase III PolC-type (1438 aa).

An Exonuclease domain is found at Tyr-422–Phe-578.

This sequence belongs to the DNA polymerase type-C family. PolC subfamily.

The protein resides in the cytoplasm. It carries out the reaction DNA(n) + a 2'-deoxyribonucleoside 5'-triphosphate = DNA(n+1) + diphosphate. Its function is as follows. Required for replicative DNA synthesis. This DNA polymerase also exhibits 3' to 5' exonuclease activity. The protein is DNA polymerase III PolC-type of Staphylococcus haemolyticus (strain JCSC1435).